Consider the following 494-residue polypeptide: Solute carrier family 2, facilitated glucose transporter member 3 (494 aa).

The Cytoplasmic portion of the chain corresponds to 1-10; the sequence is MGTTKVTAPL. Residues 11-32 traverse the membrane as a helical segment; sequence IFAISVATIGSFQFGYNTGVIN. Residues 33–64 are Extracellular-facing; it reads APEAIIKDFLNYTLEERSEPPPSSVLLTSLWS. Residue Asn43 is glycosylated (N-linked (GlcNAc...) asparagine). The chain crosses the membrane as a helical span at residues 65–85; that stretch reads LSVAIFSVGGMIGSFSVGLFV. Residues 86 to 90 lie on the Cytoplasmic side of the membrane; it reads NRFGR. Residues 91–111 traverse the membrane as a helical segment; sequence GNSMLIVNLLAIAGGCLMGFC. The Extracellular segment spans residues 112–118; that stretch reads KIAESVE. Residues 119–142 form a helical membrane-spanning segment; sequence MLILGRLIIGLFCGLCTGFVPMYI. The Cytoplasmic segment spans residues 143 to 153; the sequence is GEISPTALRGA. The chain crosses the membrane as a helical span at residues 154–174; it reads FGTLNQLGIVIGILVAQIFGL. Gln159 serves as a coordination point for D-glucose. Residues 175–183 are Extracellular-facing; sequence KVILGTEDL. A helical transmembrane segment spans residues 184–204; the sequence is WPLLLGFTILPAIIQCAALPF. Residues 205-269 lie on the Cytoplasmic side of the membrane; it reads CPESPRFLLI…LFRAPNYRQP (65 aa). Position 232 is a phosphothreonine (Thr232). The chain crosses the membrane as a helical span at residues 270–290; sequence IIISIMLQLSQQLSGINAVFY. Residues 277–279 are important for selectivity against fructose; sequence QLS. Residues 280–281 and Asn286 contribute to the D-glucose site; that span reads QQ. Over 291–304 the chain is Extracellular; that stretch reads YSTGIFKDAGVQEP. The chain crosses the membrane as a helical span at residues 305–325; sequence VYATIGAGVVNTIFTVVSVFL. Asn315 is a binding site for D-glucose. Over 326–331 the chain is Cytoplasmic; it reads VERAGR. The chain crosses the membrane as a helical span at residues 332-352; that stretch reads RTLHLIGLGGMAFCSILMTIS. The Extracellular segment spans residues 353-363; it reads LLLKDNYSWMS. Residue Asn358 is glycosylated (N-linked (GlcNAc...) asparagine). The chain crosses the membrane as a helical span at residues 364 to 389; that stretch reads FICIGAILVFVAFFEIGPGPIPWFIV. Residues Glu378 and Trp386 each contribute to the D-glucose site. The Cytoplasmic portion of the chain corresponds to 390–399; sequence AELFGQGPRP. The helical transmembrane segment at 400–420 threads the bilayer; it reads AAMAVAGCSNWTSNFLVGLLF. The Extracellular portion of the chain corresponds to 421-429; the sequence is PSAAFYLGA. A helical membrane pass occupies residues 430–450; sequence YVFIVFTVFLVIFWVFTFFKV. Residues 451-494 lie on the Cytoplasmic side of the membrane; it reads PETRGRTFEEITRAFEGQTQTGTRGEKGPIMEMNSIQPTKDTNA. The tract at residues 469 to 494 is disordered; it reads TQTGTRGEKGPIMEMNSIQPTKDTNA. Residues 484-494 are compositionally biased toward polar residues; it reads NSIQPTKDTNA. Ser485 carries the post-translational modification Phosphoserine. A Phosphothreonine modification is found at Thr492.

This sequence belongs to the major facilitator superfamily. Sugar transporter (TC 2.A.1.1) family. Glucose transporter subfamily. As to quaternary structure, interacts with SMIM43; the interaction may promote SLC2A1-mediated glucose transport to meet the energy needs of mesendoderm differentiation.

It is found in the cell membrane. The protein localises to the perikaryon. Its subcellular location is the cell projection. It catalyses the reaction D-glucose(out) = D-glucose(in). The catalysed reaction is D-galactose(in) = D-galactose(out). Its activity is regulated as follows. Deoxyglucose transport is inhibited by D-glucose, D-galactose and maltose. Galactose transport is inhibited by D-glucose and maltose. In terms of biological role, facilitative glucose transporter. Can also mediate the uptake of various other monosaccharides across the cell membrane. Mediates the uptake of glucose, 2-deoxyglucose, galactose, mannose, xylose and fucose, and probably also dehydroascorbate. Does not mediate fructose transport. Required for mesendoderm differentiation. This is Solute carrier family 2, facilitated glucose transporter member 3 from Bos taurus (Bovine).